The sequence spans 492 residues: Falcipain-3 (492 aa).

Residues 1 to 35 (MEYHMEYSPNEVIKQEREVFVGKEKSGSKFKRKRS) lie on the Cytoplasmic side of the membrane. A propeptide spans 1 to 242 (MEYHMEYSPN…LNLKTHGPFK (242 aa)) (activation peptide). Residues 16–25 (EREVFVGKEK) carry the Bipartite vacuolar targeting signal 1 motif. A helical; Signal-anchor for type II membrane protein transmembrane segment spans residues 36–56 (IFIVLTVSICFMFALMLFYFT). Over 57–492 (RNENNKTLFT…GTEAYVPLLE (436 aa)) the chain is Lumenal. The N-linked (GlcNAc...) asparagine glycan is linked to Asn61. The Bipartite vacuolar targeting signal 2 signature appears at 84–105 (KSESGKKFIVSKLEELISSYDK). A glycan (N-linked (GlcNAc...) asparagine) is linked at Asn129. A Nose motif; required for the correct folding of the mature form motif is present at residues 251–268 (EANYEDVIKKYKPADAKL). Cystine bridges form between Cys290–Cys331, Cys324–Cys365, Cys350–Cys370, and Cys419–Cys480. The active site involves Cys293. His425 is an active-site residue. The short motif at 436-445 (DIYNEDTGRM) is the Arm motif; binds to host hemoglobin and required for the inhibitory interaction between the propeptide and the catalytic domain element. Asn455 is a catalytic residue.

The protein belongs to the peptidase C1 family. Post-translationally, auto-cleavage occurs at acidic pH. The proenzyme is the predominant form in late trophozoites and both the pro and mature enzyme are present in schizonts.

The protein localises to the membrane. Its subcellular location is the vacuole. The protein resides in the cytoplasmic vesicle membrane. Inhibited by cysteine protease inhibitor ICP. Functionally, cysteine protease which cleaves native host hemoglobin and globin in the food vacuole during the asexual blood stage. Preferentially cleaves substrates which have an arginine at the P1 position and a leucine at the P2 position. In Plasmodium falciparum (isolate 3D7), this protein is Falcipain-3.